We begin with the raw amino-acid sequence, 509 residues long: ATP synthase subunit alpha (509 aa).

171-178 (GDRQTGKT) provides a ligand contact to ATP.

It belongs to the ATPase alpha/beta chains family. F-type ATPases have 2 components, CF(1) - the catalytic core - and CF(0) - the membrane proton channel. CF(1) has five subunits: alpha(3), beta(3), gamma(1), delta(1), epsilon(1). CF(0) has three main subunits: a(1), b(2) and c(9-12). The alpha and beta chains form an alternating ring which encloses part of the gamma chain. CF(1) is attached to CF(0) by a central stalk formed by the gamma and epsilon chains, while a peripheral stalk is formed by the delta and b chains.

It is found in the cell inner membrane. The enzyme catalyses ATP + H2O + 4 H(+)(in) = ADP + phosphate + 5 H(+)(out). Its function is as follows. Produces ATP from ADP in the presence of a proton gradient across the membrane. The alpha chain is a regulatory subunit. This is ATP synthase subunit alpha from Neorickettsia sennetsu (strain ATCC VR-367 / Miyayama) (Ehrlichia sennetsu).